We begin with the raw amino-acid sequence, 382 residues long: Cytoplasmic tRNA 2-thiolation protein 2 (382 aa).

The protein belongs to the CTU2/NCS2 family.

It is found in the cytoplasm. The protein operates within tRNA modification; 5-methoxycarbonylmethyl-2-thiouridine-tRNA biosynthesis. In terms of biological role, plays a central role in 2-thiolation of mcm(5)S(2)U at tRNA wobble positions of tRNA(Lys), tRNA(Glu) and tRNA(Gln). May act by forming a heterodimer with NCS6 that ligates sulfur from thiocarboxylated URM1 onto the uridine of tRNAs at wobble position. Prior mcm(5) tRNA modification by the elongator complex is required for 2-thiolation. May also be involved in protein urmylation. This chain is Cytoplasmic tRNA 2-thiolation protein 2, found in Phaeosphaeria nodorum (strain SN15 / ATCC MYA-4574 / FGSC 10173) (Glume blotch fungus).